A 769-amino-acid polypeptide reads, in one-letter code: Intron Large complex component GCFC2 (769 aa).

2 disordered regions span residues 1-122 (MALR…PIVE) and 134-212 (RKRE…DENQ). Residues S16, S17, S19, and S85 each carry the phosphoserine modification. Residue T86 is modified to Phosphothreonine. Residues S118 and S169 each carry the phosphoserine modification. Over residues 190-201 (RMAEETSIRSEE) the composition is skewed to basic and acidic residues. Acidic residues predominate over residues 202–212 (SSEESQEDENQ). Residues S203 and S206 each carry the phosphoserine modification. A coiled-coil region spans residues 256-308 (NLEIIKKQLNNRLTLLQESHRSHQREYEKYEQDIKSSKTAIQNLESASDHAQN).

The protein belongs to the GCF family. Found in the Intron Large (IL) complex, a post-mRNA release spliceosomal complex containing the excised intron, U2, U5 and U6 snRNPs, and splicing factors. Interacts with TFIP11 and DHX15.

Its subcellular location is the nucleus. It is found in the nucleoplasm. The protein localises to the nucleolus. Functionally, involved in pre-mRNA splicing through regulating spliceosome C complex formation. May play a role during late-stage splicing events and turnover of excised introns. This is Intron Large complex component GCFC2 (Gcfc2) from Mus musculus (Mouse).